Consider the following 291-residue polypeptide: uncharacterized protein (291 aa).

Disordered stretches follow at residues 1 to 62 (MELR…SSKK), 220 to 242 (PLPA…TDKV), and 255 to 291 (ENNK…SRKK). Residues 18–41 (EPAKNKSERSIESNERVGTREAKS) are compositionally biased toward basic and acidic residues. Polar residues-rich tracts occupy residues 42 to 58 (ENTS…ATTD) and 226 to 236 (PSLNLSPQKVP). Phosphoserine is present on Ser267.

It localises to the cytoplasm. The protein resides in the nucleus. This is an uncharacterized protein from Saccharomyces cerevisiae (strain ATCC 204508 / S288c) (Baker's yeast).